The chain runs to 238 residues: Large ribosomal subunit protein uL1 (238 aa).

It belongs to the universal ribosomal protein uL1 family. Part of the 50S ribosomal subunit.

Binds directly to 23S rRNA. The L1 stalk is quite mobile in the ribosome, and is involved in E site tRNA release. In terms of biological role, protein L1 is also a translational repressor protein, it controls the translation of the L11 operon by binding to its mRNA. This is Large ribosomal subunit protein uL1 from Frankia alni (strain DSM 45986 / CECT 9034 / ACN14a).